Consider the following 133-residue polypeptide: FLLGAANIPPHPLNLINFMEMIRYTIPCEKTWGEYADYGCYCGAGGSGRPIDALDRCCYVHDNCYGDAANIRDCNPKTQSYSYKLTKRTIICYGAAGTCARIVCDCDRTAALCFGNSEYIERHKNIDTKRHCR.

The first 5 residues, 1-5, serve as a signal peptide directing secretion; the sequence is FLLGA. A propeptide spanning residues 6–13 is cleaved from the precursor; sequence ANIPPHPL. Intrachain disulfides connect Cys-40–Cys-132, Cys-42–Cys-58, Cys-57–Cys-113, Cys-64–Cys-106, Cys-74–Cys-99, and Cys-92–Cys-104. Ca(2+) contacts are provided by Tyr-41, Gly-43, and Gly-45. Residue His-61 is part of the active site. Position 62 (Asp-62) interacts with Ca(2+). Residue Asp-107 is part of the active site.

This sequence belongs to the phospholipase A2 family. Group I subfamily. D49 sub-subfamily. In terms of assembly, heterodimer; disulfide-linked. The A chains have phospholipase A2 activity and the B chains show homology with the basic protease inhibitors. It depends on Ca(2+) as a cofactor. In terms of tissue distribution, expressed by the venom gland.

It is found in the secreted. The enzyme catalyses a 1,2-diacyl-sn-glycero-3-phosphocholine + H2O = a 1-acyl-sn-glycero-3-phosphocholine + a fatty acid + H(+). In terms of biological role, snake venom phospholipase A2 (PLA2) that inhibits neuromuscular transmission by blocking acetylcholine release from the nerve termini. PLA2 catalyzes the calcium-dependent hydrolysis of the 2-acyl groups in 3-sn-phosphoglycerides. The polypeptide is Basic phospholipase A2 beta-bungarotoxin A-AL2 chain (Bungarus multicinctus (Many-banded krait)).